A 203-amino-acid polypeptide reads, in one-letter code: MEGAELIIQEINREAEQKIQYILSEAQKEAEKIREEARKRAQARAEWILRKAQTQAEIEKQRIIANAKLEIRKKRLEVQEALIQEVITALRERLAELPEEEYFPMLVDLTGKAVEELGSGSVVVKSNERTLKLLEGRLDEFKKALTEKLGRDVEVTLGEPITTIGGILVETPDRTVRVDNTFESRIERFEGELRAAIAKALFG.

Belongs to the V-ATPase E subunit family. As to quaternary structure, has multiple subunits with at least A(3), B(3), C, D, E, F, H, I and proteolipid K(x).

It localises to the cell membrane. Its function is as follows. Component of the A-type ATP synthase that produces ATP from ADP in the presence of a proton gradient across the membrane. The chain is A-type ATP synthase subunit E from Thermococcus onnurineus (strain NA1).